The sequence spans 255 residues: uncharacterized protein (255 aa).

The N-terminal stretch at 1–23 is a signal peptide; sequence MKRLNKLVLGIIFLFLVISITAG. Cys-24 carries N-palmitoyl cysteine lipidation. Cys-24 carries S-diacylglycerol cysteine lipidation.

It belongs to the staphylococcal tandem lipoprotein family.

It is found in the cell membrane. This is an uncharacterized protein from Staphylococcus aureus (strain USA300).